Consider the following 335-residue polypeptide: Anthranilate phosphoribosyltransferase (335 aa).

Residues glycine 79, 82–83 (GD), threonine 87, 89–92 (NIST), 107–115 (KHGSRSVSS), and serine 119 contribute to the 5-phospho-alpha-D-ribose 1-diphosphate site. Glycine 79 contributes to the anthranilate binding site. Serine 91 is a binding site for Mg(2+). An anthranilate-binding site is contributed by arginine 165. The Mg(2+) site is built by aspartate 223 and glutamate 224.

The protein belongs to the anthranilate phosphoribosyltransferase family. As to quaternary structure, homodimer. Mg(2+) is required as a cofactor.

It carries out the reaction N-(5-phospho-beta-D-ribosyl)anthranilate + diphosphate = 5-phospho-alpha-D-ribose 1-diphosphate + anthranilate. It functions in the pathway amino-acid biosynthesis; L-tryptophan biosynthesis; L-tryptophan from chorismate: step 2/5. Catalyzes the transfer of the phosphoribosyl group of 5-phosphorylribose-1-pyrophosphate (PRPP) to anthranilate to yield N-(5'-phosphoribosyl)-anthranilate (PRA). This chain is Anthranilate phosphoribosyltransferase, found in Helicobacter pylori (strain Shi470).